We begin with the raw amino-acid sequence, 76 residues long: Acyl carrier protein (76 aa).

Residues 2–76 (SNIEERVIKV…QSAIDFVKSR (75 aa)) enclose the Carrier domain. Ser-37 is subject to O-(pantetheine 4'-phosphoryl)serine.

The protein belongs to the acyl carrier protein (ACP) family. In terms of processing, 4'-phosphopantetheine is transferred from CoA to a specific serine of apo-ACP by AcpS. This modification is essential for activity because fatty acids are bound in thioester linkage to the sulfhydryl of the prosthetic group.

Its subcellular location is the cytoplasm. It functions in the pathway lipid metabolism; fatty acid biosynthesis. Functionally, carrier of the growing fatty acid chain in fatty acid biosynthesis. The chain is Acyl carrier protein from Dichelobacter nodosus (strain VCS1703A).